Here is a 328-residue protein sequence, read N- to C-terminus: N-acetyl-gamma-glutamyl-phosphate reductase (328 aa).

Cys143 is an active-site residue.

This sequence belongs to the NAGSA dehydrogenase family. Type 1 subfamily.

The protein resides in the cytoplasm. The enzyme catalyses N-acetyl-L-glutamate 5-semialdehyde + phosphate + NADP(+) = N-acetyl-L-glutamyl 5-phosphate + NADPH + H(+). Its pathway is amino-acid biosynthesis; L-arginine biosynthesis; N(2)-acetyl-L-ornithine from L-glutamate: step 3/4. In terms of biological role, catalyzes the NADPH-dependent reduction of N-acetyl-5-glutamyl phosphate to yield N-acetyl-L-glutamate 5-semialdehyde. This Methanosphaerula palustris (strain ATCC BAA-1556 / DSM 19958 / E1-9c) protein is N-acetyl-gamma-glutamyl-phosphate reductase.